We begin with the raw amino-acid sequence, 287 residues long: uncharacterized protein (287 aa).

The segment at 1–23 (MTVSDSPAQRQTPPQTPGGTAPR) is disordered. The segment covering 7 to 23 (PAQRQTPPQTPGGTAPR) has biased composition (low complexity). Residues aspartate 31, aspartate 33, and aspartate 204 each coordinate Mg(2+).

This sequence belongs to the HAD-like hydrolase superfamily. SerB family.

This is an uncharacterized protein from Mycobacterium tuberculosis (strain CDC 1551 / Oshkosh).